The following is a 253-amino-acid chain: Cyclin-C1-2 (253 aa).

This sequence belongs to the cyclin family. Cyclin C subfamily.

The sequence is that of Cyclin-C1-2 (CYCC1-2) from Arabidopsis thaliana (Mouse-ear cress).